A 156-amino-acid chain; its full sequence is Calglandulin (156 aa).

4 consecutive EF-hand domains span residues 8–43 (EQIT…VGIN), 44–79 (PTKR…YHEK), 82–117 (NQDE…AGEP), and 118–153 (LNEQ…ESFK). Ca(2+) contacts are provided by aspartate 131, aspartate 133, aspartate 135, threonine 137, and glutamate 142.

It belongs to the calmodulin family. Calglandulin subfamily. As to expression, expressed by the venom gland.

It localises to the cytoplasm. In terms of biological role, may be involved in the cellular control mechanism of the secretion of toxins from the gland into the venom. The sequence is that of Calglandulin from Bothrops insularis (Golden lancehead).